Here is a 1070-residue protein sequence, read N- to C-terminus: DNA-directed RNA polymerase subunit beta (1070 aa).

It belongs to the RNA polymerase beta chain family. As to quaternary structure, in plastids the minimal PEP RNA polymerase catalytic core is composed of four subunits: alpha, beta, beta', and beta''. When a (nuclear-encoded) sigma factor is associated with the core the holoenzyme is formed, which can initiate transcription.

The protein resides in the plastid. It is found in the chloroplast. The catalysed reaction is RNA(n) + a ribonucleoside 5'-triphosphate = RNA(n+1) + diphosphate. DNA-dependent RNA polymerase catalyzes the transcription of DNA into RNA using the four ribonucleoside triphosphates as substrates. This is DNA-directed RNA polymerase subunit beta from Nandina domestica (Heavenly bamboo).